The sequence spans 854 residues: Disrupted in schizophrenia 1 protein (854 aa).

The segment covering 1–18 has biased composition (gly residues); the sequence is MPGGGPQGAPAAAGGGGV. Disordered stretches follow at residues 1-24, 179-205, 221-257, and 278-323; these read MPGG…RAGS, SAEL…SHSA, GERG…GPHE, and AQAA…SGDA. The segment at 1–292 is interaction with MAP1A; it reads MPGGGPQGAP…NSSRPERDMH (292 aa). An Interaction with FBXW7 motif is present at residues 197 to 203; the sequence is PTPPGSH. The segment covering 285 to 295 has biased composition (basic and acidic residues); that stretch reads SRPERDMHSLP. The segment at 293–696 is interaction with TRAF3IP1; sequence SLPDMDPGSS…LGKVWEADLE (404 aa). Residues 296–309 show a composition bias toward low complexity; sequence DMDPGSSSSLDPSL. Coiled coils occupy residues 366 to 394, 452 to 505, and 602 to 666; these read ENDD…HFQL, ITRR…CDLT, and WTAK…SVKE. A Glycyl lysine isopeptide (Lys-Gly) (interchain with G-Cter in ubiquitin) cross-link involves residue lysine 372. A required for localization to punctate cytoplasmic foci region spans residues 440–597; it reads LEPTAQDSLH…LLEAKMHAIS (158 aa). Residues 446–854 are necessary and sufficient for interaction with PCNT and localization at the centrosome; it reads DSLHVSITRR…MTAGVHEAQA (409 aa). Residues 598–854 form an interaction with ATF4 and ATF5 region; that stretch reads GNHFWTAKDL…MTAGVHEAQA (257 aa). Residues 716–739 form a disordered region; it reads VEDERQMDDLEGAAPPIPPRLHSE. Residues 727 to 854 are interaction with PAFAH1B1; it reads GAAPPIPPRL…MTAGVHEAQA (128 aa). Residues 802 to 830 are a coiled coil; that stretch reads SHDEDLIQSLRRELQMVKETLQAMILQLQ. The segment at 802-835 is interaction with NDEL1; the sequence is SHDEDLIQSLRRELQMVKETLQAMILQLQPAKEA.

Interacts with NDEL1. Interacts with CCDC88A (via C-terminus); the interaction is direct. Interacts with GSK3B. Interacts with tubulin alpha, ACTN2, ANKHD1, ATF4, ATF5, CEP63, EIF3S3, MAP1A, NDEL1, PAFAH1B1, RANBP9, SPTBN4, SYNE1 and TRAF3IP1. Interaction with microtubules may be mediated in part by TRAF3IP1. Interacts (via C-terminal) with PCNT. Interacts with CHCHD6. Interacts with CCDC141. Interacts with FBXW7, the substrate-recognition component of a SCF (SKP1-CUL1-F-box protein) E3 ubiquitin-protein ligase complex; the interaction targets DISC1 for proteasomal degradation. Interacts with ZNF365. Interacts with ATF4; inhibiting ATF4 transcription factor activity by disrupting ATF4 dimerization and DNA-binding. Interacts with PDE4B (isoform PDE4B5). Post-translationally, ubiquitinated. Ubiquitination with 'Lys-48'-linked polyubiquitin chains leads to its proteasomal degradation. As to expression, ubiquitous. Highly expressed in the dentate gyrus of the hippocampus. Also expressed in the temporal and parahippocampal cortices and cells of the white matter.

Its subcellular location is the cytoplasm. It is found in the cytoskeleton. The protein localises to the mitochondrion. It localises to the microtubule organizing center. The protein resides in the centrosome. Its subcellular location is the postsynaptic density. Involved in the regulation of multiple aspects of embryonic and adult neurogenesis. Required for neural progenitor proliferation in the ventrical/subventrical zone during embryonic brain development and in the adult dentate gyrus of the hippocampus. Participates in the Wnt-mediated neural progenitor proliferation as a positive regulator by modulating GSK3B activity and CTNNB1 abundance. Plays a role as a modulator of the AKT-mTOR signaling pathway controlling the tempo of the process of newborn neurons integration during adult neurogenesis, including neuron positioning, dendritic development and synapse formation. Inhibits the activation of AKT-mTOR signaling upon interaction with CCDC88A. Regulates the migration of early-born granule cell precursors toward the dentate gyrus during the hippocampal development. Inhibits ATF4 transcription factor activity in neurons by disrupting ATF4 dimerization and DNA-binding. Plays a role, together with PCNT, in the microtubule network formation. This Homo sapiens (Human) protein is Disrupted in schizophrenia 1 protein.